The primary structure comprises 851 residues: MDIHTLRSRWAYNVQLLKQLQWACTDTAKRSLNGTISNIEASSFANNLQKCTEALQFCIQKSLTIERTLKNYEIDVPLPVIKDVLLEQELMKYYTVILMEGCKLIFDYSISIFRIGTEPRFMLCLIKLYLNLDSITELLGNEGNQFSDLLNSFEYQFMTQYNIINCNTIHLDQVRDIFAKSNPLIAPPLLTVNDIEKRGYFFLSSVDLHIDNKLIEIAQLKNGHLAVFYVNSQRQSFSTNGAKQLLKELVEGRMELLNMGRTLLFQTLKQRDMVIFLEFEDSLELVTNNSLTKKLLIQCVDKVSWCTYWKIYLENLFSEEQARTNVKASTSMLNPSHSFQNFKIKHTKLSELRPVSHQGIALNIPQKKSQNCQANITKSDDLEEDPGFKFAIHQSNPINEIYTSQTEELITSPSLNEIEYLSYDKLIALDRSLELTLSPKLLESPREANYKTVSQTFSLDRINNISQNTPEVSDQESIVSNDELEKEPVFNPSVEDHKPQLLRKKSSLLSIFSNKNKSKNKNNLKLEINSQMSSSNLSLNSASSSRTFFSVNSNDSTSTTVSDKYIEDSDRFQLDNTTSILQLKVTKASCWDKSSWQVLSSFPLLLSLVKDHEAVYLTLQNPSNSGRFKFVTRISNIWKTTRSTAKDIQISIPTKDILATILDDLTNTTPRYQVLSLRTEEAERLKNTIDHCINGDMLSSISNSTTTRTLSSDASSSYMSQVSSNVSRSSTEVSDLNVHDFKSMASVKNILVLSDIKARLHTKNNGRWCPHHIGLVNIYSLETPNNKKGIRFELTTDTRTTFQFNSKIHDLKRLGRTGIAMIDDSEYLFEFPNNVITEQIYRYIAPSHPMI.

The protein belongs to the UPF0508 family.

This chain is UPF0508 protein CAGL0M08074g, found in Candida glabrata (strain ATCC 2001 / BCRC 20586 / JCM 3761 / NBRC 0622 / NRRL Y-65 / CBS 138) (Yeast).